The chain runs to 1177 residues: MTGQLVQYGRHRQRRSYARISEVLELPNLIEIQTSSYQWFLDEGLREMFQDISPIEDFTGNLSLEFIDYSLGEPKYSVEECKERDVTYAAPLRVKVRLINKETGEVKEQDVFMGDFPLMTETGTFVINGAERVIVSQLVRSPSVYYSGKVDKNGKRGFTATVIPNRGAWLEYETDAKDVVYVRIDRTRKLPVTVLLRALGFGSDQEITELLGDNEYLSNTLEKDNTDSTEKALLEIYERLRPGEPPTVENAKSLLVSRFFDPKRYDLANVGRYKINKKLHIKNRLFNQRLAETLVDPETGEILAAEGTVLDRRTLDRILPYLEKNIGFKTAKPMGGVVAGDVELQSIKIYAPESEGERSINVIGNANITRDIKHITPGDILASISYFFNLLYKVGDTDDIDHLGNRRLRSVGELLQNQFRIGLSRMERVVRERMSIQDTNAITPQALINIRPVIASIKEFFGSSQLSQFMDQTNPLAELTHKRRLSALGPGGLTRERAGFEVRDVHYSHYGRMCPIETPEGPNIGLINSLSSFAKVNEFGFIETPYRRVDPETGLVTGQVDYLTADEEDNYVVAQANMKLSEVGEFLDEDIVARFRGENIVTNKERIDYMDVSPKQVVSAATACIPFLENDDSNRALMGANMQRQAVPLINPESPIVGTGMEYVSAKDSGAAVICKQPGVVERVEAREVWVRRYVDVDGQTVKGDLDRYKMQKFIRSNQGTCYNQRPIVSVGDQVVKGEILADGPSMELGELALGRNVLVGFMTWDGYNYEDAIIMSERLVKDDVYTSIHIEEYESEARDTKLGPEEITRDIPNVGEDALRNLDERGIIRVGAEVKDGDLLVGKVTPKGVTELTAEERLLHAIFGEKAREVRDTSLRVPHGGGGIILDVKVFNREDGDELPPGVNQLVRAYIVQKRKISEGDKMAGRHGNKGVISRILPEEDMPYLPDGTPIDIMLNPLGVPSRMNIGQVLELHLGMAARYLGIHIATPVFDGAREEDVWGTIEEAGMANDAKTILYDGRTGEPFDNRVSVGVMYMIKLAHMVDDKLHARSTGPYSLVTQQPLGGKAQFGGQRFGEMEVWALEAYGAAYTLQEILTVKSDDVIGRVKTYEAIVKGENVPEPGVPESFKVLIKELQSLGMDVKMMSINDTEIEMRDTEDDDDHQSADKLNVEVETTKE.

Residues 1154–1177 (RDTEDDDDHQSADKLNVEVETTKE) form a disordered region. Positions 1162 to 1177 (HQSADKLNVEVETTKE) are enriched in basic and acidic residues.

Belongs to the RNA polymerase beta chain family. The RNAP catalytic core consists of 2 alpha, 1 beta, 1 beta' and 1 omega subunit. When a sigma factor is associated with the core the holoenzyme is formed, which can initiate transcription.

It catalyses the reaction RNA(n) + a ribonucleoside 5'-triphosphate = RNA(n+1) + diphosphate. Its function is as follows. DNA-dependent RNA polymerase catalyzes the transcription of DNA into RNA using the four ribonucleoside triphosphates as substrates. This is DNA-directed RNA polymerase subunit beta from Bacillus mycoides (strain KBAB4) (Bacillus weihenstephanensis).